The primary structure comprises 205 residues: Peptidyl-tRNA hydrolase (205 aa).

Residue tyrosine 14 participates in tRNA binding. The active-site Proton acceptor is histidine 19. The tRNA site is built by tyrosine 68, asparagine 70, and asparagine 116.

The protein belongs to the PTH family. In terms of assembly, monomer.

It localises to the cytoplasm. The catalysed reaction is an N-acyl-L-alpha-aminoacyl-tRNA + H2O = an N-acyl-L-amino acid + a tRNA + H(+). Functionally, hydrolyzes ribosome-free peptidyl-tRNAs (with 1 or more amino acids incorporated), which drop off the ribosome during protein synthesis, or as a result of ribosome stalling. Catalyzes the release of premature peptidyl moieties from peptidyl-tRNA molecules trapped in stalled 50S ribosomal subunits, and thus maintains levels of free tRNAs and 50S ribosomes. This Caulobacter vibrioides (strain ATCC 19089 / CIP 103742 / CB 15) (Caulobacter crescentus) protein is Peptidyl-tRNA hydrolase.